A 714-amino-acid polypeptide reads, in one-letter code: ATP-dependent DNA helicase DinG (714 aa).

Residues 17–294 (ALQDQIPDFI…TSMEQFRPKT (278 aa)) form the Helicase ATP-binding domain. Residue 54–61 (APTGVGKT) participates in ATP binding. Residues C120, C194, C199, and C205 each coordinate [4Fe-4S] cluster. A DEAH box motif is present at residues 248 to 251 (DEGH). A Helicase C-terminal domain is found at 517–698 (HIAEMAAYFR…VFPIEQPAVP (182 aa)).

Belongs to the helicase family. DinG subfamily. Type 1 sub-subfamily. Requires [4Fe-4S] cluster as cofactor.

The catalysed reaction is Couples ATP hydrolysis with the unwinding of duplex DNA at the replication fork by translocating in the 5'-3' direction. This creates two antiparallel DNA single strands (ssDNA). The leading ssDNA polymer is the template for DNA polymerase III holoenzyme which synthesizes a continuous strand.. The enzyme catalyses ATP + H2O = ADP + phosphate + H(+). In terms of biological role, DNA-dependent ATPase and 5'-3' DNA helicase. Unwinds D-loops, R-loops, forked DNA and G-quadruplex DNA. This chain is ATP-dependent DNA helicase DinG, found in Salmonella choleraesuis (strain SC-B67).